Here is a 281-residue protein sequence, read N- to C-terminus: Urease accessory protein UreD 2 (281 aa).

Belongs to the UreD family. As to quaternary structure, ureD, UreF and UreG form a complex that acts as a GTP-hydrolysis-dependent molecular chaperone, activating the urease apoprotein by helping to assemble the nickel containing metallocenter of UreC. The UreE protein probably delivers the nickel.

The protein localises to the cytoplasm. Its function is as follows. Required for maturation of urease via the functional incorporation of the urease nickel metallocenter. This Pseudomonas syringae pv. tomato (strain ATCC BAA-871 / DC3000) protein is Urease accessory protein UreD 2.